A 126-amino-acid polypeptide reads, in one-letter code: MAVPSEFKYSKEHEWVKIENNVATVGITEYAQNELGDIVFVELPETDDELNEGDTFGSVESVKTVSELYAPISGKIVEVNEELEDSPEFVNESPYEKAWMVKIEISDDSQLEELLSADQYSEMIGE.

One can recognise a Lipoyl-binding domain in the interval 22-104 (VATVGITEYA…YEKAWMVKIE (83 aa)). K63 bears the N6-lipoyllysine mark.

This sequence belongs to the GcvH family. As to quaternary structure, the glycine cleavage system is composed of four proteins: P, T, L and H. (R)-lipoate serves as cofactor.

The glycine cleavage system catalyzes the degradation of glycine. The H protein shuttles the methylamine group of glycine from the P protein to the T protein. Its function is as follows. Is also involved in protein lipoylation via its role as an octanoyl/lipoyl carrier protein intermediate. This chain is Glycine cleavage system H protein, found in Staphylococcus epidermidis (strain ATCC 12228 / FDA PCI 1200).